The sequence spans 328 residues: Phosphate acetyltransferase (328 aa).

This sequence belongs to the phosphate acetyltransferase and butyryltransferase family.

The protein localises to the cytoplasm. It carries out the reaction acetyl-CoA + phosphate = acetyl phosphate + CoA. The protein operates within metabolic intermediate biosynthesis; acetyl-CoA biosynthesis; acetyl-CoA from acetate: step 2/2. The chain is Phosphate acetyltransferase (pta) from Staphylococcus aureus (strain COL).